The following is an 882-amino-acid chain: Valine--tRNA ligase (882 aa).

The short motif at 50–60 is the 'HIGH' region element; the sequence is PNVTGKLHLGH. Residues 526-530 carry the 'KMSKS' region motif; that stretch reads KMSKS. ATP is bound at residue lysine 529. The stretch at 810 to 881 forms a coiled coil; that stretch reads LEALIDLDLE…VLERIETLKE (72 aa).

Belongs to the class-I aminoacyl-tRNA synthetase family. ValS type 1 subfamily. As to quaternary structure, monomer.

It is found in the cytoplasm. The catalysed reaction is tRNA(Val) + L-valine + ATP = L-valyl-tRNA(Val) + AMP + diphosphate. In terms of biological role, catalyzes the attachment of valine to tRNA(Val). As ValRS can inadvertently accommodate and process structurally similar amino acids such as threonine, to avoid such errors, it has a 'posttransfer' editing activity that hydrolyzes mischarged Thr-tRNA(Val) in a tRNA-dependent manner. The polypeptide is Valine--tRNA ligase (Listeria innocua serovar 6a (strain ATCC BAA-680 / CLIP 11262)).